A 482-amino-acid chain; its full sequence is NADH-quinone oxidoreductase subunit D (482 aa).

Low complexity predominate over residues 1 to 16; that stretch reads MTTNTSTSSTTDDLTT. The interval 1 to 48 is disordered; it reads MTTNTSTSSTTDDLTTGAPNGTGAPDGANGVGGPTGTVGGPGEHPAYE. Gly residues predominate over residues 29–42; it reads NGVGGPTGTVGGPG.

The protein belongs to the complex I 49 kDa subunit family. NDH-1 is composed of 14 different subunits. Subunits NuoB, C, D, E, F, and G constitute the peripheral sector of the complex.

It is found in the cell membrane. The catalysed reaction is a quinone + NADH + 5 H(+)(in) = a quinol + NAD(+) + 4 H(+)(out). NDH-1 shuttles electrons from NADH, via FMN and iron-sulfur (Fe-S) centers, to quinones in the respiratory chain. The immediate electron acceptor for the enzyme in this species is believed to be a menaquinone. Couples the redox reaction to proton translocation (for every two electrons transferred, four hydrogen ions are translocated across the cytoplasmic membrane), and thus conserves the redox energy in a proton gradient. The protein is NADH-quinone oxidoreductase subunit D of Frankia casuarinae (strain DSM 45818 / CECT 9043 / HFP020203 / CcI3).